We begin with the raw amino-acid sequence, 127 residues long: Putative histone H3.3-like type 3 (127 aa).

N6-acetyllysine is present on residues K6 and K15. Residues K19, K28, and K71 each carry the N6-methylated lysine modification.

This sequence belongs to the histone H3 family. In terms of assembly, the nucleosome is a histone octamer containing two molecules each of H2A, H2B, H3 and H4 assembled in one H3-H4 heterotetramer and two H2A-H2B heterodimers. The octamer wraps approximately 147 bp of DNA. Acetylation is generally linked to gene activation.

The protein localises to the nucleus. It is found in the chromosome. In terms of biological role, putative variant histone H3 which may replace conventional H3 in a subset of nucleosomes. Nucleosomes wrap and compact DNA into chromatin, limiting DNA accessibility to the cellular machineries which require DNA as a template. Histones thereby play a central role in transcription regulation, DNA repair, DNA replication and chromosomal stability. DNA accessibility is regulated via a complex set of post-translational modifications of histones, also called histone code, and nucleosome remodeling. The sequence is that of Putative histone H3.3-like type 3 (his-69) from Caenorhabditis elegans.